Reading from the N-terminus, the 387-residue chain is 4-hydroxy-3-methylbut-2-en-1-yl diphosphate synthase (flavodoxin) (387 aa).

4 residues coordinate [4Fe-4S] cluster: cysteine 280, cysteine 283, cysteine 315, and glutamate 322.

Belongs to the IspG family. It depends on [4Fe-4S] cluster as a cofactor.

The catalysed reaction is (2E)-4-hydroxy-3-methylbut-2-enyl diphosphate + oxidized [flavodoxin] + H2O + 2 H(+) = 2-C-methyl-D-erythritol 2,4-cyclic diphosphate + reduced [flavodoxin]. It participates in isoprenoid biosynthesis; isopentenyl diphosphate biosynthesis via DXP pathway; isopentenyl diphosphate from 1-deoxy-D-xylulose 5-phosphate: step 5/6. Functionally, converts 2C-methyl-D-erythritol 2,4-cyclodiphosphate (ME-2,4cPP) into 1-hydroxy-2-methyl-2-(E)-butenyl 4-diphosphate. This is 4-hydroxy-3-methylbut-2-en-1-yl diphosphate synthase (flavodoxin) from Mycobacterium bovis (strain ATCC BAA-935 / AF2122/97).